Here is a 104-residue protein sequence, read N- to C-terminus: DNA-directed RNA polymerase subunit omega (104 aa).

The interval 76–104 (IEEEKRRKEEEEKKIKEQIAKEKEDGEKI) is disordered.

It belongs to the RNA polymerase subunit omega family. As to quaternary structure, the RNAP catalytic core consists of 2 alpha, 1 beta, 1 beta' and 1 omega subunit. When a sigma factor is associated with the core the holoenzyme is formed, which can initiate transcription.

It carries out the reaction RNA(n) + a ribonucleoside 5'-triphosphate = RNA(n+1) + diphosphate. Promotes RNA polymerase assembly. Latches the N- and C-terminal regions of the beta' subunit thereby facilitating its interaction with the beta and alpha subunits. The polypeptide is DNA-directed RNA polymerase subunit omega (Streptococcus pneumoniae (strain CGSP14)).